Consider the following 449-residue polypeptide: Chromosomal replication initiator protein DnaA (449 aa).

Residues 1 to 71 form a domain I, interacts with DnaA modulators region; that stretch reads MPSSLWKHCL…LLSHYSSGRI (71 aa). The interval 71–112 is domain II; it reads IEKALLEVGSCSLQPQPHIQAVELTSKSARSSSRVVDRIPES. The domain III, AAA+ region stretch occupies residues 113-329; that stretch reads RLNKNYTFDS…GALRRVIAYS (217 aa). 4 residues coordinate ATP: glycine 157, glycine 159, lysine 160, and threonine 161. A domain IV, binds dsDNA region spans residues 330-449; that stretch reads RFTHRPITME…YHNLLKKLST (120 aa).

This sequence belongs to the DnaA family. In terms of assembly, oligomerizes as a right-handed, spiral filament on DNA at oriC.

The protein resides in the cytoplasm. Plays an essential role in the initiation and regulation of chromosomal replication. ATP-DnaA binds to the origin of replication (oriC) to initiate formation of the DNA replication initiation complex once per cell cycle. Binds the DnaA box (a 9 base pair repeat at the origin) and separates the double-stranded (ds)DNA. Forms a right-handed helical filament on oriC DNA; dsDNA binds to the exterior of the filament while single-stranded (ss)DNA is stabiized in the filament's interior. The ATP-DnaA-oriC complex binds and stabilizes one strand of the AT-rich DNA unwinding element (DUE), permitting loading of DNA polymerase. After initiation quickly degrades to an ADP-DnaA complex that is not apt for DNA replication. Binds acidic phospholipids. The protein is Chromosomal replication initiator protein DnaA of Nitrosococcus oceani (strain ATCC 19707 / BCRC 17464 / JCM 30415 / NCIMB 11848 / C-107).